A 449-amino-acid polypeptide reads, in one-letter code: Probable secreted beta-glucosidase ARB_04747 (449 aa).

Positions 1 to 21 (MKFSSGILSLAVAASVQSVQA) are cleaved as a signal peptide. N-linked (GlcNAc...) asparagine glycosylation is present at Asn57. The interval 96-185 (SPPACPAPSY…RPFPDGEIDC (90 aa)) is disordered. Residues 98–125 (PACPAPSYVPSPPAAPSSPPAAPQPPSK) show a composition bias toward pro residues. The span at 131-150 (EEPKKPEEPKKPEGPKKPEG) shows a compositional bias: basic and acidic residues.

It belongs to the SUN family.

It localises to the secreted. The protein resides in the cell wall. In terms of biological role, cell surface beta-glucosidase involved in cytokinesis, cell wall biogenesis, adhesion to host tissue; thus playing an important role in the host-pathogen interaction. Has hydrolytic activity on linear (1-&gt;3)-beta-D-glucans such as laminaribiose and other laminarioligosaccharides. This chain is Probable secreted beta-glucosidase ARB_04747, found in Arthroderma benhamiae (strain ATCC MYA-4681 / CBS 112371) (Trichophyton mentagrophytes).